We begin with the raw amino-acid sequence, 604 residues long: Elongation factor 4 (604 aa).

The region spanning 7–189 is the tr-type G domain; that stretch reads SRLRNFCIIA…AVVDRIPPPA (183 aa). GTP is bound by residues 19-24 and 136-139; these read DHGKST and NKID.

The protein belongs to the TRAFAC class translation factor GTPase superfamily. Classic translation factor GTPase family. LepA subfamily.

The protein resides in the cell inner membrane. The catalysed reaction is GTP + H2O = GDP + phosphate + H(+). Required for accurate and efficient protein synthesis under certain stress conditions. May act as a fidelity factor of the translation reaction, by catalyzing a one-codon backward translocation of tRNAs on improperly translocated ribosomes. Back-translocation proceeds from a post-translocation (POST) complex to a pre-translocation (PRE) complex, thus giving elongation factor G a second chance to translocate the tRNAs correctly. Binds to ribosomes in a GTP-dependent manner. The chain is Elongation factor 4 from Prochlorococcus marinus (strain MIT 9313).